Here is a 285-residue protein sequence, read N- to C-terminus: GPN-loop GTPase 3 (285 aa).

Residue 13–18 (GSGKST) coordinates GTP. The Gly-Pro-Asn (GPN)-loop; involved in dimer interface motif lies at 72–74 (GPN). Residue 174 to 177 (TKMD) coordinates GTP. The segment at 261-285 (KEPKENEEDKSENFDEFFQDRADEP) is disordered. The segment covering 265 to 277 (ENEEDKSENFDEF) has biased composition (acidic residues).

This sequence belongs to the GPN-loop GTPase family. Heterodimer with gpn1. Binds to RNA polymerase II (RNAPII).

Functionally, small GTPase required for proper localization of RNA polymerase II (RNAPII). May act at an RNAP assembly step prior to nuclear import. This chain is GPN-loop GTPase 3, found in Xenopus tropicalis (Western clawed frog).